A 368-amino-acid polypeptide reads, in one-letter code: 1-deoxy-D-xylulose 5-phosphate reductoisomerase (368 aa).

Threonine 7, glycine 8, serine 9, isoleucine 10, glycine 31, lysine 32, asparagine 33, and asparagine 113 together coordinate NADPH. Lysine 114 contributes to the 1-deoxy-D-xylulose 5-phosphate binding site. Glutamate 115 is an NADPH binding site. Aspartate 133 provides a ligand contact to Mn(2+). The 1-deoxy-D-xylulose 5-phosphate site is built by serine 134, glutamate 135, serine 158, and histidine 181. Glutamate 135 contacts Mn(2+). Glycine 187 is an NADPH binding site. Serine 194, asparagine 199, lysine 200, and glutamate 203 together coordinate 1-deoxy-D-xylulose 5-phosphate. Glutamate 203 contributes to the Mn(2+) binding site.

This sequence belongs to the DXR family. It depends on Mg(2+) as a cofactor. Mn(2+) is required as a cofactor.

The enzyme catalyses 2-C-methyl-D-erythritol 4-phosphate + NADP(+) = 1-deoxy-D-xylulose 5-phosphate + NADPH + H(+). It functions in the pathway isoprenoid biosynthesis; isopentenyl diphosphate biosynthesis via DXP pathway; isopentenyl diphosphate from 1-deoxy-D-xylulose 5-phosphate: step 1/6. Its function is as follows. Catalyzes the NADPH-dependent rearrangement and reduction of 1-deoxy-D-xylulose-5-phosphate (DXP) to 2-C-methyl-D-erythritol 4-phosphate (MEP). This Helicobacter pylori (strain P12) protein is 1-deoxy-D-xylulose 5-phosphate reductoisomerase.